The primary structure comprises 119 residues: Large ribosomal subunit protein bL20 (119 aa).

The protein belongs to the bacterial ribosomal protein bL20 family.

Binds directly to 23S ribosomal RNA and is necessary for the in vitro assembly process of the 50S ribosomal subunit. It is not involved in the protein synthesizing functions of that subunit. This chain is Large ribosomal subunit protein bL20, found in Heliobacterium modesticaldum (strain ATCC 51547 / Ice1).